The following is a 110-amino-acid chain: NADH-quinone oxidoreductase subunit K (110 aa).

The next 3 helical transmembrane spans lie at 13 to 33 (LNHY…GLFM), 41 to 61 (ILMS…AFSI), and 73 to 93 (IIIL…LLIY).

It belongs to the complex I subunit 4L family. As to quaternary structure, NDH-1 is composed of 14 different subunits. Subunits NuoA, H, J, K, L, M, N constitute the membrane sector of the complex.

The protein resides in the cell inner membrane. The enzyme catalyses a quinone + NADH + 5 H(+)(in) = a quinol + NAD(+) + 4 H(+)(out). NDH-1 shuttles electrons from NADH, via FMN and iron-sulfur (Fe-S) centers, to quinones in the respiratory chain. The immediate electron acceptor for the enzyme in this species is believed to be ubiquinone. Couples the redox reaction to proton translocation (for every two electrons transferred, four hydrogen ions are translocated across the cytoplasmic membrane), and thus conserves the redox energy in a proton gradient. This chain is NADH-quinone oxidoreductase subunit K, found in Rickettsia felis (strain ATCC VR-1525 / URRWXCal2) (Rickettsia azadi).